The primary structure comprises 274 residues: MQFSKMHGLGNDFVVVDGVTQNVFFTPETIRRLANRHCGIGFDQLLIVEAPYDPELDFHYRIFNADGSEVSQCGNGARCFARFVTLKGLTNKKDISVSTQKGNMVLTVKDDNQIRVNMGEPIWEPAKIPFTANKFEKNYILRTDIQTVLCGAVSMGNPHCVVQVDDIQTANVEQLGPLLESHERFPERVNAGFMQIINKEHIKLRVYERGAGETQACGSGACAAVAVGIMQGLLNNNVQVDLSGGSLMIEWNGVGHPLYMTGEATHIYDGFITL.

Asn-11, Gln-44, and Asn-64 together coordinate substrate. Cys-73 functions as the Proton donor in the catalytic mechanism. Residues 74–75 (GN), Asn-157, Asn-190, and 208–209 (ER) each bind substrate. The active-site Proton acceptor is Cys-217. 218 to 219 (GS) provides a ligand contact to substrate.

Belongs to the diaminopimelate epimerase family. As to quaternary structure, homodimer.

The protein resides in the cytoplasm. The enzyme catalyses (2S,6S)-2,6-diaminopimelate = meso-2,6-diaminopimelate. It participates in amino-acid biosynthesis; L-lysine biosynthesis via DAP pathway; DL-2,6-diaminopimelate from LL-2,6-diaminopimelate: step 1/1. Its function is as follows. Catalyzes the stereoinversion of LL-2,6-diaminopimelate (L,L-DAP) to meso-diaminopimelate (meso-DAP), a precursor of L-lysine and an essential component of the bacterial peptidoglycan. The sequence is that of Diaminopimelate epimerase from Haemophilus influenzae (strain PittGG).